The following is a 122-amino-acid chain: Non-specific lipid-transfer protein (122 aa).

The N-terminal stretch at 1-19 (MGVSRACFVVMVVVYMVVA) is a signal peptide. The propeptide occupies 20 to 29 (ATPNVKLAEA). 4 cysteine pairs are disulfide-bonded: cysteine 32/cysteine 81, cysteine 42/cysteine 58, cysteine 59/cysteine 104, and cysteine 79/cysteine 118.

As to quaternary structure, monomer.

Its function is as follows. Plant non-specific lipid-transfer proteins transfer phospholipids as well as galactolipids across membranes. May play a role in wax or cutin deposition in the cell walls of expanding epidermal cells and certain secretory tissues. Binds saturated fatty acids, unsaturated fatty acids, lysolipids and, with highest efficiency, jasmonic acid. Has weak antimicrobial activity against fungi. Inhibits spore germination and hyphae elongation in A.niger VKM F-2259 and N.crassa VKM F-184. Has no antibacterial activity against A.tumefaciens A281, C.michiganensis VKM Ac-144 and P.syringae VKM B-1546. This is Non-specific lipid-transfer protein from Anethum graveolens (Dill).